Reading from the N-terminus, the 146-residue chain is Large ribosomal subunit protein eL32 (146 aa).

The protein belongs to the eukaryotic ribosomal protein eL32 family.

The sequence is that of Large ribosomal subunit protein eL32 (rpl32e) from Methanocaldococcus jannaschii (strain ATCC 43067 / DSM 2661 / JAL-1 / JCM 10045 / NBRC 100440) (Methanococcus jannaschii).